The following is a 338-amino-acid chain: Lipoate-protein ligase A (338 aa).

A BPL/LPL catalytic domain is found at 29–216 (PATQRVLFLW…AFFAHYGERV (188 aa)). ATP is bound by residues Arg-71, 76 to 79 (GAVF), and Lys-134. Lys-134 is a binding site for (R)-lipoate.

It belongs to the LplA family. Monomer.

It is found in the cytoplasm. The enzyme catalyses L-lysyl-[lipoyl-carrier protein] + (R)-lipoate + ATP = N(6)-[(R)-lipoyl]-L-lysyl-[lipoyl-carrier protein] + AMP + diphosphate + H(+). It participates in protein modification; protein lipoylation via exogenous pathway; protein N(6)-(lipoyl)lysine from lipoate: step 1/2. The protein operates within protein modification; protein lipoylation via exogenous pathway; protein N(6)-(lipoyl)lysine from lipoate: step 2/2. Its function is as follows. Catalyzes both the ATP-dependent activation of exogenously supplied lipoate to lipoyl-AMP and the transfer of the activated lipoyl onto the lipoyl domains of lipoate-dependent enzymes. In Salmonella schwarzengrund (strain CVM19633), this protein is Lipoate-protein ligase A.